Consider the following 298-residue polypeptide: Small ribosomal subunit protein uS2 (298 aa).

The disordered stretch occupies residues 272 to 298 (EGGDWAASSAAPAGESWAEAQPTEAKW).

The protein belongs to the universal ribosomal protein uS2 family. Component of the small ribosomal subunit. Mature ribosomes consist of a small (40S) and a large (60S) subunit. The 40S subunit contains about 33 different proteins and 1 molecule of RNA (18S). The 60S subunit contains about 49 different proteins and 3 molecules of RNA (25S, 5.8S and 5S). Interacts with rps21.

It is found in the cytoplasm. Required for the assembly and/or stability of the 40S ribosomal subunit. Required for the processing of the 20S rRNA-precursor to mature 18S rRNA in a late step of the maturation of 40S ribosomal subunits. In Aspergillus niger (strain ATCC MYA-4892 / CBS 513.88 / FGSC A1513), this protein is Small ribosomal subunit protein uS2 (rps0).